The following is a 620-amino-acid chain: FAD-linked oxidoreductase notD (620 aa).

A signal peptide spans 1-21 (MHYIRELLIVVFTSCPALSYA). N50, N86, and N109 each carry an N-linked (GlcNAc...) asparagine glycan. Residues 124–313 (SQGRIPRYSA…TSVTMPVFGA (190 aa)) form the FAD-binding PCMH-type domain. A glycan (N-linked (GlcNAc...) asparagine) is linked at N403.

The protein belongs to the oxygen-dependent FAD-linked oxidoreductase family. It depends on FAD as a cofactor.

Its pathway is alkaloid biosynthesis. Its function is as follows. FAD-linked oxidoreductase; part of the gene cluster that mediates the biosynthesis of notoamide, a fungal indole alkaloid that belongs to a family of natural products containing a characteristic bicyclo[2.2.2]diazaoctane core. The first step of notoamide biosynthesis involves coupling of L-proline and L-tryptophan by the bimodular NRPS notE, to produce cyclo-L-tryptophan-L-proline called brevianamide F. The reverse prenyltransferase notF then acts as a deoxybrevianamide E synthase and converts brevianamide F to deoxybrevianamide E via reverse prenylation at C-2 of the indole ring leading to the bicyclo[2.2.2]diazaoctane core. Deoxybrevianamide E is further hydroxylated at C-6 of the indole ring, likely catalyzed by the cytochrome P450 monooxygenase notG, to yield 6-hydroxy-deoxybrevianamide E. 6-hydroxy-deoxybrevianamide E is a specific substrate of the prenyltransferase notC for normal prenylation at C-7 to produce 6-hydroxy-7-prenyl-deoxybrevianamide, also called notoamide S. As the proposed pivotal branching point in notoamide biosynthesis, notoamide S can be diverted to notoamide E through an oxidative pyran ring closure putatively catalyzed by either notH cytochrome P450 monooxygenase or the notD FAD-linked oxidoreductase. This step would be followed by an indole 2,3-epoxidation-initiated pinacol-like rearrangement catalyzed by the notB FAD-dependent monooxygenase leading to the formation of notoamide C and notoamide D. On the other hand notoamide S is converted to notoamide T by notH (or notD), a bifunctional oxidase that also functions as the intramolecular Diels-Alderase responsible for generation of (+)-notoamide T. To generate antipodal (-)-notoaminide T, notH' (or notD') in Aspergillus versicolor is expected to catalyze a Diels-Alder reaction leading to the opposite stereochemistry. The remaining oxidoreductase notD (or notH) likely catalyzes the oxidative pyran ring formation to yield (+)-stephacidin A. The FAD-dependent monooxygenase notI is highly similar to notB and is predicted to catalyze a similar conversion from (+)-stephacidin A to (-)-notoamide B via the 2,3-epoxidation of (+)-stephacidin A followed by a pinacol-type rearrangement. Finally, it remains unclear which enzyme could be responsible for the final hydroxylation steps leading to notoamide A and sclerotiamide. The sequence is that of FAD-linked oxidoreductase notD from Aspergillus sp. (strain MF297-2).